Here is a 246-residue protein sequence, read N- to C-terminus: Orotidine 5'-phosphate decarboxylase (246 aa).

Substrate is bound by residues Asp-22, Lys-44, 71 to 80, Thr-131, Arg-192, Gln-201, Gly-221, and Arg-222; that span reads DLKFHDIPNT. Lys-73 serves as the catalytic Proton donor.

The protein belongs to the OMP decarboxylase family. Type 1 subfamily. In terms of assembly, homodimer.

The catalysed reaction is orotidine 5'-phosphate + H(+) = UMP + CO2. Its pathway is pyrimidine metabolism; UMP biosynthesis via de novo pathway; UMP from orotate: step 2/2. Functionally, catalyzes the decarboxylation of orotidine 5'-monophosphate (OMP) to uridine 5'-monophosphate (UMP). This is Orotidine 5'-phosphate decarboxylase from Enterobacter sp. (strain 638).